Reading from the N-terminus, the 516-residue chain is Homeobox protein 6 (516 aa).

Over residues Asn-22–Ser-31 the composition is skewed to low complexity. Disordered stretches follow at residues Asn-22 to Asn-140, Ser-200 to Ser-256, and Asp-268 to Asp-348. Positions Ile-32 to Ser-41 are enriched in gly residues. Composition is skewed to low complexity over residues Ser-42–Gly-59, Ser-66–Ser-78, and Thr-101–Ser-132. The segment covering Asn-284–Asn-346 has biased composition (low complexity). DNA-binding regions (homeobox) lie at residues Lys-362–Gly-421 and Ser-424–Ser-483. The disordered stretch occupies residues Ser-483–Phe-516. Residues Asn-495–Glu-504 show a composition bias toward low complexity. Positions Asn-505–Phe-516 are enriched in acidic residues.

Its subcellular location is the nucleus. Putative transcription factor. This Dictyostelium discoideum (Social amoeba) protein is Homeobox protein 6 (hbx6).